Reading from the N-terminus, the 133-residue chain is Cytochrome c-type biogenesis protein CcmE (133 aa).

The Cytoplasmic segment spans residues 1 to 7; it reads MKKKHKR. Residues 8–28 form a helical; Signal-anchor for type II membrane protein membrane-spanning segment; that stretch reads LLITSGIFCFLSCIVFFILTT. The Periplasmic segment spans residues 29–133; it reads LKENISFFYT…YMPKVLKQIP (105 aa). Heme contacts are provided by H120 and Y124.

It belongs to the CcmE/CycJ family.

It is found in the cell inner membrane. In terms of biological role, heme chaperone required for the biogenesis of c-type cytochromes. Transiently binds heme delivered by CcmC and transfers the heme to apo-cytochromes in a process facilitated by CcmF and CcmH. This is Cytochrome c-type biogenesis protein CcmE from Wolbachia sp. subsp. Drosophila simulans (strain wRi).